Reading from the N-terminus, the 445-residue chain is 6-phosphogluconate dehydrogenase, decarboxylating (445 aa).

NADP(+)-binding positions include 1–4 (AVMG), 22–24 (NRS), 63–65 (VKA), and Asn91. Substrate contacts are provided by residues Asn91 and 117–119 (SGG). The active-site Proton acceptor is Lys172. Residue 175-176 (HN) participates in substrate binding. The active-site Proton donor is the Glu179. Substrate is bound by residues Tyr180, Lys249, Arg276, Arg434, and His440.

It belongs to the 6-phosphogluconate dehydrogenase family. In terms of assembly, homodimer.

It catalyses the reaction 6-phospho-D-gluconate + NADP(+) = D-ribulose 5-phosphate + CO2 + NADPH. It functions in the pathway carbohydrate degradation; pentose phosphate pathway; D-ribulose 5-phosphate from D-glucose 6-phosphate (oxidative stage): step 3/3. Functionally, catalyzes the oxidative decarboxylation of 6-phosphogluconate to ribulose 5-phosphate and CO(2), with concomitant reduction of NADP to NADPH. The polypeptide is 6-phosphogluconate dehydrogenase, decarboxylating (gnd) (Shigella dysenteriae).